Here is an 889-residue protein sequence, read N- to C-terminus: MSGVNEIRSTFLNYFAKNGHEIVSSSPLVPRNDPTLMFTNAGMVQFKNVFTGLEKRSYQRATTSQKCVRAGGKHNDLDNVGYTARHLTFFEMLGNFSFGDYFKERAIELAWNLITRDFGLKKDKLLVTVYHTDDEAAGYWKKIAGFSDDRIIRIPTSDNFWAMGDTGPCGPCSEIFIDRGEHIFGGPPGSPDEDGDRFLEFWNLVFMQYDQVTKDERVPLPRPSIDTGMGLERMASILQGVDSVFDTDLFRSLIDATSSALGRGPTEQDAASFRVIADHLRSSSFLIADGVLPSNEGRGYVLRRIMRRAMRHAQLLGASEPLMWRLVWALVREMGQAYPELVRAEAMIEETMRLEETRFRKTLDRGLAILDEKSAGLKKGDMFDGETAFTLYDTYGFPLDLTQDALRNRGINVDIASFTDAMDRQRAKARASWAGSGEAATEAVWFSLREKLGATEFLGYDTETAEGVVTALVKDGAEVDALKAGESGAIIVNQTPFYAESGGQVGDTGVLTADGVRFVVTDTMKKAGDLFVHFGTVEQGSIKLGDALALDVDHARRSAIRANHSATHLLHEALRQVLGDHIAQKGSLVAPDRLRFDFVHQKPITQDELRKVEDIANDIVLENDEVVTRLMAVDDAREAGARALFGEKYGDEVRVVSMGKAARDHGSNVFGWSVELCGGTHVKRTGDIGLVSITGESAVAAGVRRIEALTGRAARHNANAAISTAKLAASELRTTLDDMPARITALMDERKKLERELSEARKKLAMGGSAAGDGAASDVRDIGGIKLMARAVEGIEIKDLKGLVDQGKKQLGSGVIALVATSEDGKGSIVVGVTPDLVSRFSAVDLVRKASEVLGGKGGGGKPDMAQAGGPDGSKAGAALEAIAAAIGG.

Positions 564, 568, 677, and 681 each coordinate Zn(2+).

The protein belongs to the class-II aminoacyl-tRNA synthetase family. The cofactor is Zn(2+).

The protein resides in the cytoplasm. The enzyme catalyses tRNA(Ala) + L-alanine + ATP = L-alanyl-tRNA(Ala) + AMP + diphosphate. Its function is as follows. Catalyzes the attachment of alanine to tRNA(Ala) in a two-step reaction: alanine is first activated by ATP to form Ala-AMP and then transferred to the acceptor end of tRNA(Ala). Also edits incorrectly charged Ser-tRNA(Ala) and Gly-tRNA(Ala) via its editing domain. This Rhodopseudomonas palustris (strain ATCC BAA-98 / CGA009) protein is Alanine--tRNA ligase.